The sequence spans 215 residues: Kunitz trypsin inhibitor 4 (215 aa).

A signal peptide spans Met1–Gly28. Cystine bridges form between Cys66/Cys112 and Cys165/Cys176. An N-linked (GlcNAc...) asparagine glycan is attached at Asn206.

This sequence belongs to the protease inhibitor I3 (leguminous Kunitz-type inhibitor) family. Expressed in roots.

The protein resides in the endoplasmic reticulum. Its function is as follows. Exhibits Kunitz trypsin protease inhibitor activity. Involved in modulating programmed cell death (PCD) in plant-pathogen interactions. Can inhibit both serine proteases and cysteine proteases. May be involved in the modulation of the proteases that participate in the hydrolysis of dietary proteins in the gut of spider mites. This is Kunitz trypsin inhibitor 4 from Arabidopsis thaliana (Mouse-ear cress).